The chain runs to 275 residues: NH(3)-dependent NAD(+) synthetase (275 aa).

46 to 53 (GISGGQDS) provides a ligand contact to ATP. Position 52 (Asp52) interacts with Mg(2+). Arg140 serves as a coordination point for deamido-NAD(+). Thr160 is a binding site for ATP. Position 165 (Glu165) interacts with Mg(2+). Deamido-NAD(+) is bound by residues Lys173 and Asp180. Residues Lys189 and Thr211 each coordinate ATP. 260–261 (HK) lines the deamido-NAD(+) pocket.

Belongs to the NAD synthetase family. In terms of assembly, homodimer.

It carries out the reaction deamido-NAD(+) + NH4(+) + ATP = AMP + diphosphate + NAD(+) + H(+). It participates in cofactor biosynthesis; NAD(+) biosynthesis; NAD(+) from deamido-NAD(+) (ammonia route): step 1/1. Its function is as follows. Catalyzes the ATP-dependent amidation of deamido-NAD to form NAD. Uses ammonia as a nitrogen source. This is NH(3)-dependent NAD(+) synthetase from Shigella boydii serotype 4 (strain Sb227).